The primary structure comprises 267 residues: Glucosamine-6-phosphate deaminase (267 aa).

Catalysis depends on Asp72, which acts as the Proton acceptor; for enolization step. The active-site For ring-opening step is the Asp141. The Proton acceptor; for ring-opening step role is filled by His143. Glu148 acts as the For ring-opening step in catalysis.

Belongs to the glucosamine/galactosamine-6-phosphate isomerase family. NagB subfamily. As to quaternary structure, homohexamer.

It catalyses the reaction alpha-D-glucosamine 6-phosphate + H2O = beta-D-fructose 6-phosphate + NH4(+). Its pathway is amino-sugar metabolism; N-acetylneuraminate degradation; D-fructose 6-phosphate from N-acetylneuraminate: step 5/5. Allosterically activated by N-acetylglucosamine 6-phosphate (GlcNAc6P). Its function is as follows. Catalyzes the reversible isomerization-deamination of glucosamine 6-phosphate (GlcN6P) to form fructose 6-phosphate (Fru6P) and ammonium ion. The protein is Glucosamine-6-phosphate deaminase of Mannheimia succiniciproducens (strain KCTC 0769BP / MBEL55E).